The chain runs to 355 residues: Blue-sensitive opsin P467 (355 aa).

Residues 1–36 (MNGTEGINFYVPLSNKTGLVRSPFEYPQYYLADPWK) lie on the Extracellular side of the membrane. N-linked (GlcNAc...) asparagine glycosylation is found at asparagine 2 and asparagine 15. The helical transmembrane segment at 37-61 (FKVLSFYMFFLIAAGMPLNGLTLFV) threads the bilayer. The Cytoplasmic portion of the chain corresponds to 62 to 73 (TFQHKKLRQPLN). Residues 74-98 (YILVNLAAANLVTVCCGFTVTFYAS) form a helical membrane-spanning segment. The Extracellular portion of the chain corresponds to 99 to 113 (WYAYFVFGPIGCAIE). Cysteine 110 and cysteine 187 are joined by a disulfide. A helical transmembrane segment spans residues 114-133 (GFFATIGGQVALWSLVVLAI). Topologically, residues 134–152 (ERYIVICKPMGNFRFSATH) are cytoplasmic. The chain crosses the membrane as a helical span at residues 153–176 (AIMGIAFTWFMALACAGPPLFGWS). The Extracellular portion of the chain corresponds to 177-202 (RFIPEGMQCSCGPDYYTLNPDFHNES). N-linked (GlcNAc...) asparagine glycosylation is present at asparagine 200. Residues 203–230 (YVIYMFIVHFTVPMVVIFFSYGRLVCKV) traverse the membrane as a helical segment. Residues 231 to 252 (REAAAQQQESATTQKAEKEVTR) are Cytoplasmic-facing. Residues 253 to 276 (MVILMVLGFLLAWTPYAATAIWIF) traverse the membrane as a helical segment. Over 277-284 (TNRGAAFS) the chain is Extracellular. A helical transmembrane segment spans residues 285–309 (VTFMTIPAFFSKSSSIYNPIIYVLL). The residue at position 296 (lysine 296) is an N6-(retinylidene)lysine. The Cytoplasmic segment spans residues 310–355 (NKQFRNCMVTTICCGKNPFGDEDVSSSVSQSKTEVSSVSSSQVAPA). Residues 333–355 (VSSSVSQSKTEVSSVSSSQVAPA) form a disordered region. The span at 334–355 (SSSVSQSKTEVSSVSSSQVAPA) shows a compositional bias: low complexity.

It belongs to the G-protein coupled receptor 1 family. Opsin subfamily. In terms of processing, phosphorylated on some or all of the serine and threonine residues present in the C-terminal region. In terms of tissue distribution, in this lizard the color pigments are found in the rod-shaped photoreceptor cells which have been derived from ancestral cone-like photoreceptors.

The protein resides in the membrane. Visual pigments are the light-absorbing molecules that mediate vision. They consist of an apoprotein, opsin, covalently linked to cis-retinal. In Gekko gecko (Tokay gecko), this protein is Blue-sensitive opsin P467.